A 333-amino-acid polypeptide reads, in one-letter code: Phenylalanine--tRNA ligase alpha subunit (333 aa).

Position 258 (Glu258) interacts with Mg(2+).

Belongs to the class-II aminoacyl-tRNA synthetase family. Phe-tRNA synthetase alpha subunit type 1 subfamily. As to quaternary structure, tetramer of two alpha and two beta subunits. It depends on Mg(2+) as a cofactor.

The protein localises to the cytoplasm. The catalysed reaction is tRNA(Phe) + L-phenylalanine + ATP = L-phenylalanyl-tRNA(Phe) + AMP + diphosphate + H(+). The chain is Phenylalanine--tRNA ligase alpha subunit from Wigglesworthia glossinidia brevipalpis.